Here is a 270-residue protein sequence, read N- to C-terminus: MADEEQMERKEEATEIAPFDPTKKKKKKKVVIQDPADEVDKLAEKTEGLSVTESGEASFVGLKKKKKKLVELDPSLVEAGDGEDTLDDQVGEDEQGEGIVLGGATQYPWEGTDRDYKYDELLGRVFNILRENNPDLAGDRRRTVMRPPQVLREGTKKTVFVNFMDLCKTMHRQPEHVMMFLLAEMGTSGSLDGQQRLVIKGRFAPKNFEAILRRYINEYVICHGCKSPDTILSKENRLFFLRCEQCGSSRSVAPIKAGFVAQVGRRKAGT.

The segment at 1–38 (MADEEQMERKEEATEIAPFDPTKKKKKKKVVIQDPADE) is disordered.

Belongs to the eIF-2-beta/eIF-5 family. As to quaternary structure, eukaryotic translation initiation factor 2 eIF2 is a heterotrimeric complex composed of an alpha, a beta and a gamma subunit.

The protein localises to the cytoplasm. It localises to the cytosol. Component of the eIF2 complex that functions in the early steps of protein synthesis by forming a ternary complex with GTP and initiator tRNA. This complex binds to a 40S ribosomal subunit, followed by mRNA binding to form a 43S pre-initiation complex (43S PIC). Junction of the 60S ribosomal subunit to form the 80S initiation complex is preceded by hydrolysis of the GTP bound to eIF2 and release of an eIF2-GDP binary complex. In order for eIF2 to recycle and catalyze another round of initiation, the GDP bound to eIF2 must exchange with GTP by way of a reaction catalyzed by eIF2B. The protein is Eukaryotic translation initiation factor 2 subunit beta of Triticum aestivum (Wheat).